Consider the following 617-residue polypeptide: Leucine aminopeptidase 2 (617 aa).

A peptide contacts are provided by residues 139–141 (QCQ) and 271–276 (PYGGME). His300 is a Zn(2+) binding site. Residue Glu301 is the Proton acceptor of the active site. His304 and Glu323 together coordinate Zn(2+). The active-site Proton donor is Tyr388.

This sequence belongs to the peptidase M1 family. Requires Zn(2+) as cofactor.

It localises to the cytoplasm. The protein resides in the nucleus. It catalyses the reaction an epoxide + H2O = an ethanediol. In terms of biological role, aminopeptidase that preferentially cleaves di- and tripeptides. Also has low epoxide hydrolase activity (in vitro). Can hydrolyze the epoxide leukotriene LTA(4) but it forms preferentially 5,6-dihydroxy-7,9,11,14-eicosatetraenoic acid rather than the cytokine leukotriene B(4) as the product compared to the homologous mammalian enzyme (in vitro). The protein is Leucine aminopeptidase 2 of Aspergillus terreus (strain NIH 2624 / FGSC A1156).